A 139-amino-acid chain; its full sequence is Putative esterase PM0788 (139 aa).

This sequence belongs to the thioesterase PaaI family.

The polypeptide is Putative esterase PM0788 (Pasteurella multocida (strain Pm70)).